The sequence spans 418 residues: Phospho-N-acetylmuramoyl-pentapeptide-transferase (418 aa).

10 consecutive transmembrane segments (helical) span residues 22–42, 72–92, 95–115, 135–155, 208–228, 244–264, 277–297, 302–322, 326–346, and 395–415; these read YISF…VLIG, TPTM…LLLA, SNIY…LGLI, IIAQ…SPNI, AATW…VSNG, AIIG…GFAA, LTVF…HNAF, FMGD…AIII, LLLP…MIQV, and KIVV…VVTL.

This sequence belongs to the glycosyltransferase 4 family. MraY subfamily. The cofactor is Mg(2+).

Its subcellular location is the cell inner membrane. The catalysed reaction is UDP-N-acetyl-alpha-D-muramoyl-L-alanyl-gamma-D-glutamyl-meso-2,6-diaminopimeloyl-D-alanyl-D-alanine + di-trans,octa-cis-undecaprenyl phosphate = di-trans,octa-cis-undecaprenyl diphospho-N-acetyl-alpha-D-muramoyl-L-alanyl-D-glutamyl-meso-2,6-diaminopimeloyl-D-alanyl-D-alanine + UMP. Its pathway is cell wall biogenesis; peptidoglycan biosynthesis. In terms of biological role, catalyzes the initial step of the lipid cycle reactions in the biosynthesis of the cell wall peptidoglycan: transfers peptidoglycan precursor phospho-MurNAc-pentapeptide from UDP-MurNAc-pentapeptide onto the lipid carrier undecaprenyl phosphate, yielding undecaprenyl-pyrophosphoryl-MurNAc-pentapeptide, known as lipid I. The polypeptide is Phospho-N-acetylmuramoyl-pentapeptide-transferase (Azobacteroides pseudotrichonymphae genomovar. CFP2).